The chain runs to 488 residues: Ribulose bisphosphate carboxylase large chain (488 aa).

Substrate-binding residues include Asn127 and Thr177. The active-site Proton acceptor is the Lys179. Lys181 contributes to the substrate binding site. Residues Lys205, Asp207, and Glu208 each contribute to the Mg(2+) site. Lys205 carries the N6-carboxylysine modification. The active-site Proton acceptor is the His297. Positions 298, 330, and 382 each coordinate substrate.

The protein belongs to the RuBisCO large chain family. Type I subfamily. Heterohexadecamer of 8 large chains and 8 small chains. Mg(2+) serves as cofactor.

Its subcellular location is the plastid. It localises to the chloroplast. The enzyme catalyses 2 (2R)-3-phosphoglycerate + 2 H(+) = D-ribulose 1,5-bisphosphate + CO2 + H2O. The catalysed reaction is D-ribulose 1,5-bisphosphate + O2 = 2-phosphoglycolate + (2R)-3-phosphoglycerate + 2 H(+). Functionally, ruBisCO catalyzes two reactions: the carboxylation of D-ribulose 1,5-bisphosphate, the primary event in carbon dioxide fixation, as well as the oxidative fragmentation of the pentose substrate in the photorespiration process. Both reactions occur simultaneously and in competition at the same active site. The sequence is that of Ribulose bisphosphate carboxylase large chain from Pyropia suborbiculata (Red alga).